The primary structure comprises 186 residues: Ribosome-recycling factor (186 aa).

Composition is skewed to basic and acidic residues over residues 134–169 (RDAN…KKAE) and 176–186 (AKAREAEVMED). The tract at residues 134–186 (RDANKAAETAEKDKEMTEDDRDKTKDQVQELTKKAETNVNESAKAREAEVMED) is disordered.

Belongs to the RRF family.

The protein localises to the cytoplasm. Its function is as follows. Responsible for the release of ribosomes from messenger RNA at the termination of protein biosynthesis. May increase the efficiency of translation by recycling ribosomes from one round of translation to another. The polypeptide is Ribosome-recycling factor (Rhodopirellula baltica (strain DSM 10527 / NCIMB 13988 / SH1)).